A 509-amino-acid polypeptide reads, in one-letter code: 3-ketoacyl-CoA synthase 11 (509 aa).

2 consecutive transmembrane segments (helical) span residues L36–I56 and L75–T95. The 290-residue stretch at Y92 to L381 folds into the FAE domain. Residues C236, H315, H399, H403, and N436 contribute to the active site.

This sequence belongs to the thiolase-like superfamily. Chalcone/stilbene synthases family. In terms of tissue distribution, only expressed in guard cells. Expressed in siliques, flowers, leaves, stems, roots and seedlings.

It localises to the membrane. The enzyme catalyses a very-long-chain acyl-CoA + malonyl-CoA + H(+) = a very-long-chain 3-oxoacyl-CoA + CO2 + CoA. Its pathway is lipid metabolism; fatty acid biosynthesis. In terms of biological role, active on both saturated and mono-unsaturated acyl chains C16 to C20. In Arabidopsis thaliana (Mouse-ear cress), this protein is 3-ketoacyl-CoA synthase 11.